We begin with the raw amino-acid sequence, 97 residues long: Co-chaperonin GroES (97 aa).

The protein belongs to the GroES chaperonin family. In terms of assembly, heptamer of 7 subunits arranged in a ring. Interacts with the chaperonin GroEL.

The protein resides in the cytoplasm. Its function is as follows. Together with the chaperonin GroEL, plays an essential role in assisting protein folding. The GroEL-GroES system forms a nano-cage that allows encapsulation of the non-native substrate proteins and provides a physical environment optimized to promote and accelerate protein folding. GroES binds to the apical surface of the GroEL ring, thereby capping the opening of the GroEL channel. This is Co-chaperonin GroES from Stenotrophomonas maltophilia (Pseudomonas maltophilia).